The following is a 1040-amino-acid chain: V(D)J recombination-activating protein 1 (1040 aa).

The segment covering 39-53 (EKAPEEAQKEKDSSE) has biased composition (basic and acidic residues). The tract at residues 39–71 (EKAPEEAQKEKDSSEGKPYLEQSPVVPEKPGGQ) is disordered. K233 is covalently cross-linked (Glycyl lysine isopeptide (Lys-Gly) (interchain with G-Cter in ubiquitin)). The Zn(2+) site is built by C266, H270, C290, C293, H295, C305, H307, C310, C313, C325, C328, C355, C360, H372, and H376. An RING-type zinc finger spans residues 290–329 (CQICEHILADPVETSCKHLFCRICILRCLKVMGSYCPSCR). The segment at 351 to 380 (LMVKCPAQDCNEEVSLEKYNHHVSSHKESK) adopts an RAG1-type zinc-finger fold. The NBD DNA-binding region spans 389-456 (GGRPRQHLLS…QADELEAIMQ (68 aa)). 3 residues coordinate a divalent metal cation: D600, D708, and E962.

Belongs to the RAG1 family. As to quaternary structure, homodimer. Component of the RAG complex composed of core components RAG1 and RAG2, and associated component HMGB1 or HMGB2. Interacts with DCAF1, leading to recruitment of the CUL4A-RBX1-DDB1-DCAF1/VPRBP complex to ubiquitinate proteins and limit error-prone repair during V(D)J recombination. Mg(2+) serves as cofactor. Mn(2+) is required as a cofactor. Post-translationally, autoubiquitinated in the presence of CDC34/UBCH3. In terms of tissue distribution, maturing lymphoid cells and central nervous system.

It localises to the nucleus. The enzyme catalyses S-ubiquitinyl-[E2 ubiquitin-conjugating enzyme]-L-cysteine + [acceptor protein]-L-lysine = [E2 ubiquitin-conjugating enzyme]-L-cysteine + N(6)-ubiquitinyl-[acceptor protein]-L-lysine.. In terms of biological role, catalytic component of the RAG complex, a multiprotein complex that mediates the DNA cleavage phase during V(D)J recombination. V(D)J recombination assembles a diverse repertoire of immunoglobulin and T-cell receptor genes in developing B and T-lymphocytes through rearrangement of different V (variable), in some cases D (diversity), and J (joining) gene segments. In the RAG complex, RAG1 mediates the DNA-binding to the conserved recombination signal sequences (RSS) and catalyzes the DNA cleavage activities by introducing a double-strand break between the RSS and the adjacent coding segment. RAG2 is not a catalytic component but is required for all known catalytic activities. DNA cleavage occurs in 2 steps: a first nick is introduced in the top strand immediately upstream of the heptamer, generating a 3'-hydroxyl group that can attack the phosphodiester bond on the opposite strand in a direct transesterification reaction, thereby creating 4 DNA ends: 2 hairpin coding ends and 2 blunt, 5'-phosphorylated ends. The chromatin structure plays an essential role in the V(D)J recombination reactions and the presence of histone H3 trimethylated at 'Lys-4' (H3K4me3) stimulates both the nicking and haipinning steps. The RAG complex also plays a role in pre-B cell allelic exclusion, a process leading to expression of a single immunoglobulin heavy chain allele to enforce clonality and monospecific recognition by the B-cell antigen receptor (BCR) expressed on individual B-lymphocytes. The introduction of DNA breaks by the RAG complex on one immunoglobulin allele induces ATM-dependent repositioning of the other allele to pericentromeric heterochromatin, preventing accessibility to the RAG complex and recombination of the second allele. In addition to its endonuclease activity, RAG1 also acts as an E3 ubiquitin-protein ligase that mediates monoubiquitination of histone H3. Histone H3 monoubiquitination is required for the joining step of V(D)J recombination. Mediates polyubiquitination of KPNA1. This Mus musculus (Mouse) protein is V(D)J recombination-activating protein 1 (Rag1).